The chain runs to 677 residues: Fermitin family homolog 1 (677 aa).

An FERM domain is found at methionine 96 to leucine 653. 3 positions are modified to phosphoserine: serine 170, serine 179, and serine 361. Residues lysine 377 to lysine 473 enclose the PH domain.

This sequence belongs to the kindlin family. Interacts with the cytoplasmic domain of integrins ITGB1 and ITGB3. As to expression, expressed in brain, skeletal muscle, kidney, colon, adrenal gland, prostate, and placenta. Weakly or not expressed in heart, thymus, spleen, liver, small intestine, bone marrow, lung and peripheral blood leukocytes. Overexpressed in some colon and lung tumors. In skin, it is localized within the epidermis and particularly in basal keratocytes. Not detected in epidermal melanocytes and dermal fibroblasts.

Its subcellular location is the cytoplasm. It localises to the cytoskeleton. It is found in the cell junction. The protein localises to the focal adhesion. The protein resides in the cell projection. Its subcellular location is the ruffle membrane. In terms of biological role, involved in cell adhesion. Contributes to integrin activation. When coexpressed with talin, potentiates activation of ITGA2B. Required for normal keratinocyte proliferation. Required for normal polarization of basal keratinocytes in skin, and for normal cell shape. Required for normal adhesion of keratinocytes to fibronectin and laminin, and for normal keratinocyte migration to wound sites. May mediate TGF-beta 1 signaling in tumor progression. This chain is Fermitin family homolog 1 (FERMT1), found in Homo sapiens (Human).